Reading from the N-terminus, the 61-residue chain is MKLSILVKAMKRNNGFRYDYCIAECSEHFLDDVCKPVCIDKGYSDGGCIGLAPNFKCCCKK.

4 disulfides stabilise this stretch: Cys-21–Cys-59, Cys-25–Cys-48, Cys-34–Cys-57, and Cys-38–Cys-58.

It belongs to the DEFL family.

The polypeptide is Putative defensin-like protein 72 (Arabidopsis thaliana (Mouse-ear cress)).